The primary structure comprises 188 residues: dCTP deaminase (188 aa).

Residues 111–116, 135–137, Gln-156, Tyr-170, and Gln-180 contribute to the dCTP site; these read KSTYAR and VLE. Glu-137 functions as the Proton donor/acceptor in the catalytic mechanism.

The protein belongs to the dCTP deaminase family. Homotrimer.

The enzyme catalyses dCTP + H2O + H(+) = dUTP + NH4(+). It functions in the pathway pyrimidine metabolism; dUMP biosynthesis; dUMP from dCTP (dUTP route): step 1/2. Its function is as follows. Catalyzes the deamination of dCTP to dUTP. This Protochlamydia amoebophila (strain UWE25) protein is dCTP deaminase.